The primary structure comprises 39 residues: Basic phospholipase A2 (39 aa).

The Ca(2+) site is built by Tyr-27, Gly-29, and Gly-31.

The protein belongs to the phospholipase A2 family. Group II subfamily. D49 sub-subfamily. The cofactor is Ca(2+). Expressed by the venom gland.

The protein localises to the secreted. It catalyses the reaction a 1,2-diacyl-sn-glycero-3-phosphocholine + H2O = a 1-acyl-sn-glycero-3-phosphocholine + a fatty acid + H(+). Is selectively inhibited by the gamma-phospholipase A2 inhibitor (PLI) CgMIP-I (AC P0DQP7) but not by the alpha-PLI CgMIP-II (AC P0DQP8). Its function is as follows. Snake venom phospholipase A2 (PLA2) that shows high myotoxic activities, induces mild edema, and shows cytolytic, and anti-coagulant activities, as well as intracerebral lethal effect. Does not induce lethality at a dose of 5 ug/g, when intravenously injected into mice. PLA2 catalyzes the calcium-dependent hydrolysis of the 2-acyl groups in 3-sn-phosphoglycerides. This chain is Basic phospholipase A2, found in Cerrophidion godmani (Porthidium godmani).